Here is a 352-residue protein sequence, read N- to C-terminus: Palmitoyltransferase PFA5 (352 aa).

Transmembrane regions (helical) follow at residues 12–32 and 53–73; these read YWTIYIVPLVVLLLMIYGTWA and IGLICTCCVLDALIIAIWVLI. Residues 114-164 enclose the DHHC domain; sequence VWCSNCQSLKVGRTKHSSHQGHCVPRFDHYCVWLGAVIGFKNYRLFVQFVF. The S-palmitoyl cysteine intermediate role is filled by Cys-144. The next 2 membrane-spanning stretches (helical) occupy residues 159 to 179 and 195 to 215; these read FVQFVFYFAVLLMIVWITISV and LIVLLIISGIGWLMTSGLFVS.

The protein belongs to the DHHC palmitoyltransferase family. PFA5 subfamily.

The protein resides in the membrane. It catalyses the reaction L-cysteinyl-[protein] + hexadecanoyl-CoA = S-hexadecanoyl-L-cysteinyl-[protein] + CoA. This is Palmitoyltransferase PFA5 (PFA5) from Candida glabrata (strain ATCC 2001 / BCRC 20586 / JCM 3761 / NBRC 0622 / NRRL Y-65 / CBS 138) (Yeast).